We begin with the raw amino-acid sequence, 384 residues long: S-adenosylmethionine synthase (384 aa).

His15 contributes to the ATP binding site. Asp17 is a binding site for Mg(2+). K(+) is bound at residue Glu43. L-methionine is bound by residues Glu56 and Gln99. The interval 99 to 109 is flexible loop; that stretch reads QSPDINQGVDR. Residues 164–166, 230–231, Asp239, 245–246, Ala262, and Lys266 each bind ATP; these read DAK, RF, and RK. Residue Asp239 coordinates L-methionine. Lys270 is a binding site for L-methionine.

This sequence belongs to the AdoMet synthase family. As to quaternary structure, homotetramer; dimer of dimers. Mg(2+) is required as a cofactor. Requires K(+) as cofactor.

It localises to the cytoplasm. The catalysed reaction is L-methionine + ATP + H2O = S-adenosyl-L-methionine + phosphate + diphosphate. It functions in the pathway amino-acid biosynthesis; S-adenosyl-L-methionine biosynthesis; S-adenosyl-L-methionine from L-methionine: step 1/1. Its function is as follows. Catalyzes the formation of S-adenosylmethionine (AdoMet) from methionine and ATP. The overall synthetic reaction is composed of two sequential steps, AdoMet formation and the subsequent tripolyphosphate hydrolysis which occurs prior to release of AdoMet from the enzyme. The protein is S-adenosylmethionine synthase of Klebsiella pneumoniae subsp. pneumoniae (strain ATCC 700721 / MGH 78578).